The primary structure comprises 181 residues: Histone deacetylase complex subunit SAP30L-B (181 aa).

2 cysteine pairs are disulfide-bonded: Cys26–Cys27 and Cys35–Cys71. An Atypical zinc finger spans residues 26 to 74 (CCLIDGGERCPRPAGNASFSKRVQKSISQKKLKLDIDKSVRHLYICDFH). The segment at 82–103 (RNKRKRKTSDDGGDSPEHETDV) is disordered. Positions 83 to 88 (NKRKRK) match the Nuclear localization signal (NLS) motif. The tract at residues 85 to 87 (RKR) is important for DNA and phosphoinositide binding.

The protein belongs to the SAP30 family. In terms of assembly, interacts with components of the histone deacetylase complex sin3a, hdac1 and hdac2. Binds histones and nucleosomes.

Its subcellular location is the nucleus. The protein localises to the nucleolus. In terms of biological role, functions as a transcription repressor, probably via its interaction with histone deacetylase complexes. Involved in the functional recruitment of the class 1 Sin3-histone deacetylase complex (HDAC) to the nucleolus. Binds DNA, apparently without sequence-specificity, and bends bound double-stranded DNA. Binds phosphoinositol phosphates (phosphoinositol 3-phosphate, phosphoinositol 4-phosphate and phosphoinositol 5-phosphate) via the same basic sequence motif that mediates DNA binding and nuclear import. The polypeptide is Histone deacetylase complex subunit SAP30L-B (sap30l-b) (Xenopus laevis (African clawed frog)).